The primary structure comprises 313 residues: Homoserine O-succinyltransferase (313 aa).

The active-site Acyl-thioester intermediate is the cysteine 142. Residues lysine 163 and serine 192 each coordinate substrate. Histidine 235 functions as the Proton acceptor in the catalytic mechanism. Glutamate 237 is an active-site residue. Position 249 (arginine 249) interacts with substrate.

The protein belongs to the MetA family.

It localises to the cytoplasm. It catalyses the reaction L-homoserine + succinyl-CoA = O-succinyl-L-homoserine + CoA. It participates in amino-acid biosynthesis; L-methionine biosynthesis via de novo pathway; O-succinyl-L-homoserine from L-homoserine: step 1/1. Its function is as follows. Transfers a succinyl group from succinyl-CoA to L-homoserine, forming succinyl-L-homoserine. In Vibrio vulnificus (strain YJ016), this protein is Homoserine O-succinyltransferase.